A 270-amino-acid polypeptide reads, in one-letter code: Catechol 1,2-dioxygenase (270 aa).

Residues Y152, Y186, H210, and H212 each contribute to the Fe cation site.

It belongs to the intradiol ring-cleavage dioxygenase family. Fe(3+) is required as a cofactor.

It catalyses the reaction catechol + O2 = cis,cis-muconate + 2 H(+). In Rhodococcus opacus (Nocardia opaca), this protein is Catechol 1,2-dioxygenase (catA).